The chain runs to 438 residues: Trigger factor (438 aa).

The 86-residue stretch at 160–245 (DDKVTIDFVG…VKKIQQAELP (86 aa)) folds into the PPIase FKBP-type domain.

It belongs to the FKBP-type PPIase family. Tig subfamily.

The protein localises to the cytoplasm. The catalysed reaction is [protein]-peptidylproline (omega=180) = [protein]-peptidylproline (omega=0). In terms of biological role, involved in protein export. Acts as a chaperone by maintaining the newly synthesized protein in an open conformation. Functions as a peptidyl-prolyl cis-trans isomerase. This is Trigger factor from Francisella tularensis subsp. tularensis (strain FSC 198).